The chain runs to 416 residues: Lipase (416 aa).

The N-terminal stretch at 1-28 is a signal peptide; the sequence is MKCCRIMFVLLGLWFVFGLSVPGGRTEA. The Nucleophile role is filled by Ser141. A Ca(2+)-binding site is contributed by Gly314. The active-site Charge relay system is the Asp345. Residue Asp385 participates in Ca(2+) binding. His386 functions as the Charge relay system in the catalytic mechanism. Ca(2+) is bound by residues Glu388, Asp393, and Pro394.

This sequence belongs to the AB hydrolase superfamily. As to quaternary structure, homodimer.

Its subcellular location is the secreted. The catalysed reaction is a triacylglycerol + H2O = a diacylglycerol + a fatty acid + H(+). With respect to regulation, activity is inhibited by zinc and iron ions, and activated in vitro in 25% v/v DMSO and acetone. In terms of biological role, triacylglycerol hydrolase that shows hydrolysis preference towards some of the natural oils such as olive, sunflower and corn oils. The protein is Lipase of Bacillus sp.